We begin with the raw amino-acid sequence, 377 residues long: Glutamate 5-kinase (377 aa).

Residue Lys21 participates in ATP binding. Positions 61, 149, and 161 each coordinate substrate. Residues 181–182 (SD) and 223–229 (SGGMTSK) contribute to the ATP site. A PUA domain is found at 286–363 (RGSVQVDAGA…REHEELLGYA (78 aa)).

It belongs to the glutamate 5-kinase family.

The protein resides in the cytoplasm. The catalysed reaction is L-glutamate + ATP = L-glutamyl 5-phosphate + ADP. The protein operates within amino-acid biosynthesis; L-proline biosynthesis; L-glutamate 5-semialdehyde from L-glutamate: step 1/2. In terms of biological role, catalyzes the transfer of a phosphate group to glutamate to form L-glutamate 5-phosphate. The chain is Glutamate 5-kinase from Novosphingobium aromaticivorans (strain ATCC 700278 / DSM 12444 / CCUG 56034 / CIP 105152 / NBRC 16084 / F199).